A 319-amino-acid polypeptide reads, in one-letter code: GPI-specific phospholipase A2-like PGAP3 (319 aa).

Residues 1-23 form the signal peptide; the sequence is MAGRTARLVLLAGAAALASGSQG. Topologically, residues 24–101 are lumenal; the sequence is DREPVYRDCV…GKWPFSRFLC (78 aa). N-linked (GlcNAc...) asparagine glycosylation occurs at N40. The helical transmembrane segment at 102 to 122 threads the bilayer; the sequence is FQEPASAVASFLNGLASLVML. Residues 123 to 135 lie on the Cytoplasmic side of the membrane; sequence CRYRTSVPASSPM. Residues 136 to 156 form a helical membrane-spanning segment; that stretch reads YPTCVAFAWVSLNAWFWSTVF. Residues 157 to 169 are Lumenal-facing; the sequence is HTRDTDLTEKMDY. Residues 170–190 form a helical membrane-spanning segment; the sequence is FCASTVILHSIYLCCVRTVGL. Residues 191–200 are Cytoplasmic-facing; the sequence is QHPAMASAFR. The chain crosses the membrane as a helical span at residues 201 to 221; it reads ALLLLLLTAHVSYLSLIHFDY. Residues 222–224 are Lumenal-facing; the sequence is GYN. Residues 225 to 245 form a helical membrane-spanning segment; that stretch reads MAANVAIGLLNAAWWLAWCLW. At 246–257 the chain is on the cytoplasmic side; that stretch reads NQRLPHVHKCVA. A helical membrane pass occupies residues 258 to 278; the sequence is VVLLLQGLSLLELLDFPPLFW. The Lumenal portion of the chain corresponds to 279-281; that stretch reads VLD. A helical transmembrane segment spans residues 282–302; sequence AHAIWHISTIPVHVLFFSFLE. The Cytoplasmic portion of the chain corresponds to 303 to 319; sequence DDSLYLLKESEAKVKLD.

It belongs to the PGAP3 family.

It is found in the golgi apparatus membrane. In terms of biological role, involved in the fatty acid remodeling steps of GPI-anchor maturation where the unsaturated acyl chain at sn-2 of inositol phosphate is replaced by a saturated stearoyl chain. May catalyze the first step of the fatty acid remodeling, by removing the unsaturated acyl chain at sn-2 of inositol phosphate, generating a lyso-GPI intermediate. The fatty acid remodeling steps is critical for the integration of GPI-APs into lipid rafts. This Bos taurus (Bovine) protein is GPI-specific phospholipase A2-like PGAP3.